Here is a 141-residue protein sequence, read N- to C-terminus: Large ribosomal subunit protein uL11 (141 aa).

The interval 1–23 (MAKQVTGQAKFQVPGGQATPAPP) is disordered.

It belongs to the universal ribosomal protein uL11 family. In terms of assembly, part of the ribosomal stalk of the 50S ribosomal subunit. Interacts with L10 and the large rRNA to form the base of the stalk. L10 forms an elongated spine to which L12 dimers bind in a sequential fashion forming a multimeric L10(L12)X complex. One or more lysine residues are methylated.

Its function is as follows. Forms part of the ribosomal stalk which helps the ribosome interact with GTP-bound translation factors. This chain is Large ribosomal subunit protein uL11, found in Rhodopirellula baltica (strain DSM 10527 / NCIMB 13988 / SH1).